The sequence spans 144 residues: Maximins 7/H6 (144 aa).

The N-terminal stretch at 1–18 is a signal peptide; sequence MNFKYIVAVSFLIASAYA. A propeptide spanning residues 19–43 is cleaved from the precursor; it reads RSEENDEQSLSQRDILEEESLREIR. Asparagine amide is present on Asn70. Residues 74-123 constitute a propeptide that is removed on maturation; the sequence is TAEDHEVMKRLEAVMRDLDSLDYPEEAAERETRGFNQEEIANLFTKKEKR. Leu143 is modified (leucine amide).

It belongs to the bombinin family. In terms of tissue distribution, expressed by the skin glands.

It is found in the secreted. Its function is as follows. Maximin-7 shows antimicrobial activity against bacteria and against the fungus C.albicans. It has little hemolytic activity. Functionally, maximin-H6 shows antimicrobial activity against bacteria and against the fungus C.albicans. Shows strong hemolytic activity. This is Maximins 7/H6 from Bombina maxima (Giant fire-bellied toad).